We begin with the raw amino-acid sequence, 298 residues long: Bifunctional protein FolD (298 aa).

NADP(+) contacts are provided by residues 165–167 (GRS), serine 190, and isoleucine 231.

Belongs to the tetrahydrofolate dehydrogenase/cyclohydrolase family. Homodimer.

The catalysed reaction is (6R)-5,10-methylene-5,6,7,8-tetrahydrofolate + NADP(+) = (6R)-5,10-methenyltetrahydrofolate + NADPH. It catalyses the reaction (6R)-5,10-methenyltetrahydrofolate + H2O = (6R)-10-formyltetrahydrofolate + H(+). The protein operates within one-carbon metabolism; tetrahydrofolate interconversion. Catalyzes the oxidation of 5,10-methylenetetrahydrofolate to 5,10-methenyltetrahydrofolate and then the hydrolysis of 5,10-methenyltetrahydrofolate to 10-formyltetrahydrofolate. The protein is Bifunctional protein FolD of Prochlorococcus marinus (strain AS9601).